A 129-amino-acid polypeptide reads, in one-letter code: Phosphoribosyl-AMP cyclohydrolase (129 aa).

Aspartate 85 is a binding site for Mg(2+). Cysteine 86 is a Zn(2+) binding site. The Mg(2+) site is built by aspartate 87 and aspartate 89. The Zn(2+) site is built by cysteine 102 and cysteine 109.

The protein belongs to the PRA-CH family. As to quaternary structure, homodimer. Mg(2+) serves as cofactor. It depends on Zn(2+) as a cofactor.

It is found in the cytoplasm. The catalysed reaction is 1-(5-phospho-beta-D-ribosyl)-5'-AMP + H2O = 1-(5-phospho-beta-D-ribosyl)-5-[(5-phospho-beta-D-ribosylamino)methylideneamino]imidazole-4-carboxamide. Its pathway is amino-acid biosynthesis; L-histidine biosynthesis; L-histidine from 5-phospho-alpha-D-ribose 1-diphosphate: step 3/9. Catalyzes the hydrolysis of the adenine ring of phosphoribosyl-AMP. The sequence is that of Phosphoribosyl-AMP cyclohydrolase from Methanococcus maripaludis (strain C7 / ATCC BAA-1331).